The following is a 718-amino-acid chain: Peroxisomal bifunctional enzyme (718 aa).

An enoyl-CoA hydratase / isomerase region spans residues Ala2–Thr280. Gly100 contributes to the substrate binding site. The interval Leu281–Gly567 is 3-hydroxyacyl-CoA dehydrogenase. The Microbody targeting signal signature appears at Ser716 to Leu718.

It in the N-terminal section; belongs to the enoyl-CoA hydratase/isomerase family. In the C-terminal section; belongs to the 3-hydroxyacyl-CoA dehydrogenase family. In terms of assembly, monomer.

It localises to the peroxisome. The catalysed reaction is a (3S)-3-hydroxyacyl-CoA = a (2E)-enoyl-CoA + H2O. It carries out the reaction a 4-saturated-(3S)-3-hydroxyacyl-CoA = a (3E)-enoyl-CoA + H2O. The enzyme catalyses a (3Z)-enoyl-CoA = a 4-saturated (2E)-enoyl-CoA. It catalyses the reaction a (3E)-enoyl-CoA = a 4-saturated (2E)-enoyl-CoA. The catalysed reaction is a (3S)-3-hydroxyacyl-CoA + NAD(+) = a 3-oxoacyl-CoA + NADH + H(+). It carries out the reaction (2S,3S)-3-hydroxy-2-methylbutanoyl-CoA = (2E)-2-methylbut-2-enoyl-CoA + H2O. The enzyme catalyses (3S)-hydroxyhexadecanoyl-CoA + NAD(+) = 3-oxohexadecanoyl-CoA + NADH + H(+). It catalyses the reaction (3S)-hydroxyhexadecanoyl-CoA = (2E)-hexadecenoyl-CoA + H2O. The catalysed reaction is (2E)-hexadecenedioyl-CoA + H2O = (3S)-hydroxyhexadecanedioyl-CoA. It carries out the reaction (3S)-hydroxyhexadecanedioyl-CoA + NAD(+) = 3-oxohexadecanedioyl-CoA + NADH + H(+). The enzyme catalyses (3E,5Z)-tetradecadienoyl-CoA = (2E,5Z)-tetradecadienoyl-CoA. It catalyses the reaction (3E,5Z)-octadienoyl-CoA = (2E,5Z)-octadienoyl-CoA. The catalysed reaction is (3S)-hydroxydecanoyl-CoA + NAD(+) = 3-oxodecanoyl-CoA + NADH + H(+). It carries out the reaction (3E)-decenoyl-CoA = (2E)-decenoyl-CoA. The enzyme catalyses (3Z)-hexenoyl-CoA = (2E)-hexenoyl-CoA. It catalyses the reaction (3E)-hexenoyl-CoA = (2E)-hexenoyl-CoA. The catalysed reaction is (3S)-hydroxydecanoyl-CoA = (2E)-decenoyl-CoA + H2O. It carries out the reaction (3S)-hydroxyhexanoyl-CoA = (2E)-hexenoyl-CoA + H2O. Its pathway is lipid metabolism; fatty acid beta-oxidation. Functionally, peroxisomal trifunctional enzyme possessing 2-enoyl-CoA hydratase, 3-hydroxyacyl-CoA dehydrogenase, and delta 3, delta 2-enoyl-CoA isomerase activities. Catalyzes two of the four reactions of the long straight chain fatty acids peroxisomal beta-oxidation pathway. Can also use branched-chain fatty acids such as 2-methyl-2E-butenoyl-CoA as a substrate, which is hydrated into (2S,3S)-3-hydroxy-2-methylbutanoyl-CoA. Optimal isomerase for 2,5 double bonds into 3,5 form isomerization in a range of enoyl-CoA species. Also able to isomerize both 3-cis and 3-trans double bonds into the 2-trans form in a range of enoyl-CoA species. Regulates the amount of medium-chain dicarboxylic fatty acids which are essential regulators of all fatty acid oxidation pathways. Also involved in the degradation of long-chain dicarboxylic acids through peroxisomal beta-oxidation. This is Peroxisomal bifunctional enzyme (ehhadh) from Danio rerio (Zebrafish).